The following is a 279-amino-acid chain: Eukaryotic translation initiation factor 3 subunit J (279 aa).

Disordered regions lie at residues 1-74 (MSWD…SQKS) and 229-279 (ERQA…DDFM). Positions 20–39 (WEDEDNDDPLLESWDIDEEE) are enriched in acidic residues. Positions 34–74 (DIDEEEVARKKKEEEAKKKAEKEALKQKQQEAKNKKLSQKS) form a coiled coil. Basic and acidic residues predominate over residues 40-67 (VARKKKEEEAKKKAEKEALKQKQQEAKN). Acidic residues predominate over residues 268 to 279 (DDFDDFDDDDFM).

This sequence belongs to the eIF-3 subunit J family. As to quaternary structure, component of the eukaryotic translation initiation factor 3 (eIF-3) complex.

The protein localises to the cytoplasm. Functionally, component of the eukaryotic translation initiation factor 3 (eIF-3) complex, which is involved in protein synthesis of a specialized repertoire of mRNAs and, together with other initiation factors, stimulates binding of mRNA and methionyl-tRNAi to the 40S ribosome. The eIF-3 complex specifically targets and initiates translation of a subset of mRNAs involved in cell proliferation. The polypeptide is Eukaryotic translation initiation factor 3 subunit J (Meyerozyma guilliermondii (strain ATCC 6260 / CBS 566 / DSM 6381 / JCM 1539 / NBRC 10279 / NRRL Y-324) (Yeast)).